We begin with the raw amino-acid sequence, 151 residues long: MASMQKRLQKELLALQNDPPPGMTLNEKSVQNSITQWIVDMEGAPGTLYEGEKFQLLFKFSSRYPFDSPQVMFTGENIPIHPHVYSNGHICLSILTEDWSPALSVQSVCLSIISMLSSCKEKRRPPDNSFYVRTCNKNPKKTKWWYHDDTC.

M1 participates in a covalent cross-link: Peptide (Met-Gly) (interchain with G-Cter in ubiquitin). Positions 3–151 (SMQKRLQKEL…TKWWYHDDTC (149 aa)) constitute a UBC core domain. C91 serves as the catalytic Glycyl thioester intermediate.

This sequence belongs to the ubiquitin-conjugating enzyme family. In terms of assembly, homodimer. Interacts with FANCL. Interacts with STUB1/CHIP. Autoubiquitinated at Met-1.

It localises to the nucleus. The catalysed reaction is S-ubiquitinyl-[E1 ubiquitin-activating enzyme]-L-cysteine + [E2 ubiquitin-conjugating enzyme]-L-cysteine = [E1 ubiquitin-activating enzyme]-L-cysteine + S-ubiquitinyl-[E2 ubiquitin-conjugating enzyme]-L-cysteine.. The enzyme catalyses S-ubiquitinyl-[E1 ubiquitin-activating enzyme]-L-cysteine + [acceptor protein]-N-terminal-amino acid = [E1 ubiquitin-activating enzyme]-L-cysteine + N-terminal-ubiquitinyl-[acceptor protein].. Its pathway is protein modification; protein ubiquitination. Accepts ubiquitin from the E1 complex and catalyzes its covalent attachment to other proteins. Specifically monoubiquitinates the N-terminus of various substrates, including ATXN3, MAPT/TAU, POLR2H/RPB8 and STUB1/CHIP, by recognizing backbone atoms of disordered N-termini. Involved in degradation of misfolded chaperone substrates by mediating monoubiquitination of STUB1/CHIP, leading to recruitment of ATXN3 to monoubiquitinated STUB1/CHIP, and restriction of the length of ubiquitin chain attached to STUB1/CHIP substrates by ATXN3. After UV irradiation, but not after mitomycin-C (MMC) treatment, acts as a specific E2 ubiquitin-conjugating enzyme for the Fanconi anemia complex by associating with E3 ubiquitin-protein ligase FANCL and catalyzing monoubiquitination of FANCD2, a key step in the DNA damage pathway. In vitro catalyzes 'Lys-11'-linked polyubiquitination. UBE2W-catalyzed ubiquitination also occurs in the presence of inactive RING/U-box type E3s, i.e. lacking the active site cysteine residues to form thioester bonds with ubiquitin, or even in the absence of E3, albeit at a slower rate. In Mus musculus (Mouse), this protein is Ubiquitin-conjugating enzyme E2 W (Ube2w).